A 490-amino-acid chain; its full sequence is Glucose-6-phosphate 1-dehydrogenase (490 aa).

Residues arginine 48, 90–91 (DI), and lysine 145 contribute to the NADP(+) site. Residues histidine 175, lysine 179, glutamate 213, and aspartate 232 each contribute to the substrate site. Histidine 237 (proton acceptor) is an active-site residue. Residues lysine 340 and lysine 345 each contribute to the substrate site.

This sequence belongs to the glucose-6-phosphate dehydrogenase family.

It catalyses the reaction D-glucose 6-phosphate + NADP(+) = 6-phospho-D-glucono-1,5-lactone + NADPH + H(+). It functions in the pathway carbohydrate degradation; pentose phosphate pathway; D-ribulose 5-phosphate from D-glucose 6-phosphate (oxidative stage): step 1/3. Catalyzes the oxidation of glucose 6-phosphate to 6-phosphogluconolactone. The sequence is that of Glucose-6-phosphate 1-dehydrogenase from Buchnera aphidicola subsp. Baizongia pistaciae (strain Bp).